The primary structure comprises 66 residues: Photosystem II reaction center protein J (66 aa).

The chain crosses the membrane as a helical span at residues 37 to 57 (LWLVATAGGMAVLFVVGLFFY).

It belongs to the PsbJ family. In terms of assembly, PSII is composed of 1 copy each of membrane proteins PsbA, PsbB, PsbC, PsbD, PsbE, PsbF, PsbH, PsbI, PsbJ, PsbK, PsbL, PsbM, PsbT, PsbX, PsbY, PsbZ, Psb30/Ycf12, peripheral proteins PsbO, CyanoQ (PsbQ), PsbU, PsbV and a large number of cofactors. It forms dimeric complexes.

The protein resides in the cellular thylakoid membrane. Its function is as follows. One of the components of the core complex of photosystem II (PSII). PSII is a light-driven water:plastoquinone oxidoreductase that uses light energy to abstract electrons from H(2)O, generating O(2) and a proton gradient subsequently used for ATP formation. It consists of a core antenna complex that captures photons, and an electron transfer chain that converts photonic excitation into a charge separation. This Synechococcus sp. (strain WH7803) protein is Photosystem II reaction center protein J.